A 553-amino-acid polypeptide reads, in one-letter code: Hydroxylamine reductase (553 aa).

Positions 3, 6, 18, and 25 each coordinate [2Fe-2S] cluster. Hybrid [4Fe-2O-2S] cluster is bound by residues His-252, Glu-276, Cys-320, Cys-408, Cys-436, Cys-461, Glu-495, and Lys-497. Residue Cys-408 is modified to Cysteine persulfide.

The protein belongs to the HCP family. Requires [2Fe-2S] cluster as cofactor. Hybrid [4Fe-2O-2S] cluster serves as cofactor.

It localises to the cytoplasm. The catalysed reaction is A + NH4(+) + H2O = hydroxylamine + AH2 + H(+). In terms of biological role, catalyzes the reduction of hydroxylamine to form NH(3) and H(2)O. This chain is Hydroxylamine reductase, found in Vibrio vulnificus (strain YJ016).